The chain runs to 550 residues: Probable acyl-activating enzyme 9 (550 aa).

The protein belongs to the ATP-dependent AMP-binding enzyme family. In terms of tissue distribution, expressed in leaves, flowers and developing seeds.

Its function is as follows. May act as an acid--thiol ligase that activates carboxylic acids by forming acyl-CoAs. This Arabidopsis thaliana (Mouse-ear cress) protein is Probable acyl-activating enzyme 9 (AEE9).